The sequence spans 236 residues: Biosynthetic peptidoglycan transglycosylase (236 aa).

The helical transmembrane segment at 12-31 threads the bilayer; that stretch reads ALLWFVAGSIVLVLVFRWVP.

The protein belongs to the glycosyltransferase 51 family.

The protein resides in the cell inner membrane. It carries out the reaction [GlcNAc-(1-&gt;4)-Mur2Ac(oyl-L-Ala-gamma-D-Glu-L-Lys-D-Ala-D-Ala)](n)-di-trans,octa-cis-undecaprenyl diphosphate + beta-D-GlcNAc-(1-&gt;4)-Mur2Ac(oyl-L-Ala-gamma-D-Glu-L-Lys-D-Ala-D-Ala)-di-trans,octa-cis-undecaprenyl diphosphate = [GlcNAc-(1-&gt;4)-Mur2Ac(oyl-L-Ala-gamma-D-Glu-L-Lys-D-Ala-D-Ala)](n+1)-di-trans,octa-cis-undecaprenyl diphosphate + di-trans,octa-cis-undecaprenyl diphosphate + H(+). It functions in the pathway cell wall biogenesis; peptidoglycan biosynthesis. Peptidoglycan polymerase that catalyzes glycan chain elongation from lipid-linked precursors. The polypeptide is Biosynthetic peptidoglycan transglycosylase (Pseudomonas putida (strain ATCC 700007 / DSM 6899 / JCM 31910 / BCRC 17059 / LMG 24140 / F1)).